Here is a 197-residue protein sequence, read N- to C-terminus: Ribonuclease HII (197 aa).

One can recognise an RNase H type-2 domain in the interval 11–197 (NLIAGVDEVG…FAPVRKILGL (187 aa)). A divalent metal cation contacts are provided by D17, E18, and D109.

Belongs to the RNase HII family. The cofactor is Mn(2+). Mg(2+) serves as cofactor.

The protein resides in the cytoplasm. The enzyme catalyses Endonucleolytic cleavage to 5'-phosphomonoester.. Endonuclease that specifically degrades the RNA of RNA-DNA hybrids. In Haemophilus ducreyi (strain 35000HP / ATCC 700724), this protein is Ribonuclease HII.